The sequence spans 1024 residues: Multidrug resistance protein MdtC (1024 aa).

Transmembrane regions (helical) follow at residues 12–32, 333–353, 360–380, 387–407, 435–455, 469–489, 528–548, 853–873, 875–895, 897–917, 953–973, and 984–1004; these read VATT…FSLL, EVER…FIFL, LIPA…MYLC, LSLM…IVVL, VLSM…MAGL, VAIG…CAWL, WVMV…ISIP, LWLI…LYES, VHPL…LLAL, LFDA…IGIV, PIIM…LSSG, and ITIV…TPVI.

The protein belongs to the resistance-nodulation-cell division (RND) (TC 2.A.6) family. MdtC subfamily. In terms of assembly, part of a tripartite efflux system composed of MdtA, MdtB and MdtC. MdtC forms a heteromultimer with MdtB.

The protein localises to the cell inner membrane. In Yersinia pseudotuberculosis serotype IB (strain PB1/+), this protein is Multidrug resistance protein MdtC.